A 1312-amino-acid chain; its full sequence is Kinesin-like protein KIF16B (1312 aa).

In terms of domain architecture, Kinesin motor spans 3–358 (SVKVAVRVRP…LRYANRAKNI (356 aa)). 102–109 (GQTGSGKS) serves as a coordination point for ATP. A coiled-coil region spans residues 366-425 (EDANVKLIRELRAEIARLKTLLAQGNQIALLDSPTALSMEEKLHQNEARVQELTKEWTNK). Ser398 is modified (phosphoserine). Residues 480 to 544 (VGREDASTEQ…LNQGAVILLG (65 aa)) enclose the FHA domain. Thr577 is subject to Phosphothreonine. A phosphoserine mark is found at Ser582, Ser838, Ser1047, and Ser1145. Coiled-coil stretches lie at residues 835 to 913 (KLAS…LQNH) and 941 to 1073 (QVEK…KQKI). The region spanning 1177–1291 (DPIKISIPRY…KVGLTLSKHT (115 aa)) is the PX domain.

The protein belongs to the TRAFAC class myosin-kinesin ATPase superfamily. Kinesin family. As to quaternary structure, interacts with PTPN21. Interacts with RAB14.

The protein resides in the cytoplasm. The protein localises to the cytoskeleton. It localises to the early endosome membrane. It is found in the spindle. In terms of biological role, plus end-directed microtubule-dependent motor protein involved in endosome transport and receptor recycling and degradation. Regulates the plus end motility of early endosomes and the balance between recycling and degradation of receptors such as EGF receptor (EGFR) and FGF receptor (FGFR). Regulates the Golgi to endosome transport of FGFR-containing vesicles during early development, a key process for developing basement membrane and epiblast and primitive endoderm lineages during early postimplantation development. The chain is Kinesin-like protein KIF16B (Kif16b) from Mus musculus (Mouse).